We begin with the raw amino-acid sequence, 546 residues long: Probable sucrose-6-phosphate hydrolase (546 aa).

Residues 105-108, glutamine 124, 167-168, 228-229, and glutamate 283 contribute to the substrate site; these read LLND, FS, and RD. Aspartate 108 is an active-site residue.

This sequence belongs to the glycosyl hydrolase 32 family.

It is found in the cytoplasm. The enzyme catalyses Hydrolysis of terminal non-reducing beta-D-fructofuranoside residues in beta-D-fructofuranosides.. Its pathway is glycan biosynthesis; sucrose metabolism. Enables the bacterium to metabolize sucrose as a sole carbon source. The chain is Probable sucrose-6-phosphate hydrolase from Vibrio cholerae.